The primary structure comprises 348 residues: Probable dual-specificity RNA methyltransferase RlmN (348 aa).

The Proton acceptor role is filled by Glu90. One can recognise a Radical SAM core domain in the interval 96-324 (AAERLTVCVS…ASVRHTRGLE (229 aa)). Cys103 and Cys329 form a disulfide bridge. The [4Fe-4S] cluster site is built by Cys110, Cys114, and Cys117. S-adenosyl-L-methionine-binding positions include 157–158 (GE), Ser187, 210–212 (SLH), and Asn286. The active-site S-methylcysteine intermediate is Cys329.

The protein belongs to the radical SAM superfamily. RlmN family. [4Fe-4S] cluster is required as a cofactor.

It localises to the cytoplasm. It catalyses the reaction adenosine(2503) in 23S rRNA + 2 reduced [2Fe-2S]-[ferredoxin] + 2 S-adenosyl-L-methionine = 2-methyladenosine(2503) in 23S rRNA + 5'-deoxyadenosine + L-methionine + 2 oxidized [2Fe-2S]-[ferredoxin] + S-adenosyl-L-homocysteine. It carries out the reaction adenosine(37) in tRNA + 2 reduced [2Fe-2S]-[ferredoxin] + 2 S-adenosyl-L-methionine = 2-methyladenosine(37) in tRNA + 5'-deoxyadenosine + L-methionine + 2 oxidized [2Fe-2S]-[ferredoxin] + S-adenosyl-L-homocysteine. In terms of biological role, specifically methylates position 2 of adenine 2503 in 23S rRNA and position 2 of adenine 37 in tRNAs. The protein is Probable dual-specificity RNA methyltransferase RlmN of Gloeobacter violaceus (strain ATCC 29082 / PCC 7421).